A 721-amino-acid chain; its full sequence is Mitogen-activated protein kinase 6 (721 aa).

Met-1 participates in a covalent cross-link: Peptide (Met-Gly) (interchain with G-Cter in ubiquitin). The Protein kinase domain maps to 20–316; that stretch reads YMDLKPLGCG…AEEALSHPYM (297 aa). ATP-binding positions include 26–34 and Lys-49; that span reads LGCGGNGLV. Asp-152 serves as the catalytic Proton acceptor. Ser-189 carries the post-translational modification Phosphoserine; by PAK1, PAK2 and PAK3. The SEG motif motif lies at 189 to 191; that stretch reads SEG. Positions 332-337 match the FRIEDE motif motif; sequence FHIEDE. Phosphoserine occurs at positions 386, 452, 556, 558, 665, and 684. Over residues 701-715 the composition is skewed to polar residues; sequence AMKSSPQIPHQTYSS. The disordered stretch occupies residues 701–721; it reads AMKSSPQIPHQTYSSILKHLN.

Belongs to the protein kinase superfamily. CMGC Ser/Thr protein kinase family. MAP kinase subfamily. In terms of assembly, heterodimer with ERK4/MAPK4. Interacts with (via FRIEDE motif) MAPKAPK5. Interacts with UBE3A; this interaction may be indirect and mediated by HERC2, possibly via HERC2 interaction with NEURL4. It depends on Mg(2+) as a cofactor. Post-translationally, phosphorylated at Ser-189 by PAK1, PAK2 and PAK3 resulting in catalytic activation. Phosphorylated by MAPKAPK5 at other sites. In terms of processing, ubiquitination at Met-1 leads to degradation by the proteasome pathway. Highest expression in the skeletal muscle, followed by the brain. Also found in heart, placenta, lung, liver, pancreas, kidney and skin fibroblasts.

It localises to the cytoplasm. Its subcellular location is the nucleus. It carries out the reaction L-seryl-[protein] + ATP = O-phospho-L-seryl-[protein] + ADP + H(+). It catalyses the reaction L-threonyl-[protein] + ATP = O-phospho-L-threonyl-[protein] + ADP + H(+). Its activity is regulated as follows. Activated by phosphorylation at Ser-189. Atypical MAPK protein. Phosphorylates microtubule-associated protein 2 (MAP2) and MAPKAPK5. The precise role of the complex formed with MAPKAPK5 is still unclear, but the complex follows a complex set of phosphorylation events: upon interaction with atypical MAPKAPK5, ERK3/MAPK6 is phosphorylated at Ser-189 and then mediates phosphorylation and activation of MAPKAPK5, which in turn phosphorylates ERK3/MAPK6. May promote entry in the cell cycle. In Homo sapiens (Human), this protein is Mitogen-activated protein kinase 6 (MAPK6).